A 299-amino-acid chain; its full sequence is Riboflavin transporter ImpX (299 aa).

EamA domains are found at residues 6–144 (KGAL…YLLT) and 162–294 (SLYS…SIIK). 10 consecutive transmembrane segments (helical) span residues 7 to 27 (GALL…ALTP), 34 to 54 (VPFV…ILFG), 68 to 88 (DLFF…LCIV), 101 to 121 (VVTL…RLLL), 129 to 149 (YLFW…EFHL), 158 to 178 (LLPA…ATVF), 202 to 222 (IMFV…ATAG), 224 to 244 (WLIF…LYYF), 253 to 273 (VATM…YLIN), and 276 to 296 (VLSP…IKIS).

It belongs to the EamA transporter family.

The protein localises to the cell membrane. Functionally, transports riboflavin into the cell. The protein is Riboflavin transporter ImpX of Fusobacterium nucleatum subsp. nucleatum (strain ATCC 23726 / VPI 4351).